The following is a 125-amino-acid chain: Snaclec alboaggregin-A subunit beta (125 aa).

Residues 1-125 (GFDCPFGWSS…TRYPVCKFXG (125 aa)) form the C-type lectin domain. Disulfide bonds link C4–C15, C32–C121, and C98–C113.

Belongs to the snaclec family. Heterotetramer of the subunits alpha, alpha', beta and beta'; disulfide-linked. As to expression, expressed by the venom gland.

It is found in the secreted. Its function is as follows. Potent platelet activator that aggregates platelets via both GPIbalpha (GP1BA) and GPVI (GP6). Induces a tyrosine phosphorylation profile in platelets that resembles this produced by collagen, involving the time dependent tyrosine phosphorylation of Fc receptor gamma chain (FCGR1A), phospholipase Cgamma2 (PLCG2), and LAT. The polypeptide is Snaclec alboaggregin-A subunit beta (Trimeresurus albolabris (White-lipped pit viper)).